Here is a 128-residue protein sequence, read N- to C-terminus: Photosystem II reaction center Psb28 protein (128 aa).

Residues 109-128 are disordered; sequence SGLGYSQDSGEAPASDSSNG. Residues 111-128 are compositionally biased toward polar residues; the sequence is LGYSQDSGEAPASDSSNG.

The protein belongs to the Psb28 family. As to quaternary structure, part of the photosystem II complex.

The protein resides in the cellular thylakoid membrane. This chain is Photosystem II reaction center Psb28 protein, found in Synechococcus sp. (strain CC9311).